The chain runs to 230 residues: Putative 14-3-3-like protein GF14-H (230 aa).

This sequence belongs to the 14-3-3 family.

Its function is as follows. Is associated with a DNA binding complex that binds to the G box, a well-characterized cis-acting DNA regulatory element found in plant genes. The sequence is that of Putative 14-3-3-like protein GF14-H (GF14H) from Oryza sativa subsp. japonica (Rice).